We begin with the raw amino-acid sequence, 471 residues long: UDP-N-acetylmuramate--L-alanine ligase (471 aa).

125–131 contacts ATP; sequence GTHGKTT.

Belongs to the MurCDEF family.

It localises to the cytoplasm. It carries out the reaction UDP-N-acetyl-alpha-D-muramate + L-alanine + ATP = UDP-N-acetyl-alpha-D-muramoyl-L-alanine + ADP + phosphate + H(+). The protein operates within cell wall biogenesis; peptidoglycan biosynthesis. Its function is as follows. Cell wall formation. This Kineococcus radiotolerans (strain ATCC BAA-149 / DSM 14245 / SRS30216) protein is UDP-N-acetylmuramate--L-alanine ligase.